We begin with the raw amino-acid sequence, 252 residues long: Phosphate import ATP-binding protein PstB 2 (252 aa).

The region spanning 6–247 is the ABC transporter domain; it reads ISINDLSVYF…PQHKETEDYI (242 aa). ATP is bound at residue 38–45; it reads GPSGSGKS.

It belongs to the ABC transporter superfamily. Phosphate importer (TC 3.A.1.7) family. As to quaternary structure, the complex is composed of two ATP-binding proteins (PstB), two transmembrane proteins (PstC and PstA) and a solute-binding protein (PstS).

It is found in the cell membrane. It catalyses the reaction phosphate(out) + ATP + H2O = ADP + 2 phosphate(in) + H(+). In terms of biological role, part of the ABC transporter complex PstSACB involved in phosphate import. Responsible for energy coupling to the transport system. This Streptococcus thermophilus (strain CNRZ 1066) protein is Phosphate import ATP-binding protein PstB 2.